The following is a 69-amino-acid chain: Conotoxin Cal12.1p4 (69 aa).

A propeptide spanning residues 1-23 (DLITNSYTRGKPRHVTSWRNLKT) is cleaved from the precursor.

Post-translationally, contains 4 disulfide bonds. As to expression, expressed by the venom duct.

It localises to the secreted. This Californiconus californicus (California cone) protein is Conotoxin Cal12.1p4.